Here is a 386-residue protein sequence, read N- to C-terminus: Cobalt-precorrin-5B C(1)-methyltransferase (386 aa).

The protein belongs to the CbiD family.

The catalysed reaction is Co-precorrin-5B + S-adenosyl-L-methionine = Co-precorrin-6A + S-adenosyl-L-homocysteine. It functions in the pathway cofactor biosynthesis; adenosylcobalamin biosynthesis; cob(II)yrinate a,c-diamide from sirohydrochlorin (anaerobic route): step 6/10. Catalyzes the methylation of C-1 in cobalt-precorrin-5B to form cobalt-precorrin-6A. This is Cobalt-precorrin-5B C(1)-methyltransferase from Prochlorococcus marinus (strain MIT 9303).